Here is a 101-residue protein sequence, read N- to C-terminus: Aspartyl/glutamyl-tRNA(Asn/Gln) amidotransferase subunit C (101 aa).

It belongs to the GatC family. Heterotrimer of A, B and C subunits.

The enzyme catalyses L-glutamyl-tRNA(Gln) + L-glutamine + ATP + H2O = L-glutaminyl-tRNA(Gln) + L-glutamate + ADP + phosphate + H(+). The catalysed reaction is L-aspartyl-tRNA(Asn) + L-glutamine + ATP + H2O = L-asparaginyl-tRNA(Asn) + L-glutamate + ADP + phosphate + 2 H(+). Functionally, allows the formation of correctly charged Asn-tRNA(Asn) or Gln-tRNA(Gln) through the transamidation of misacylated Asp-tRNA(Asn) or Glu-tRNA(Gln) in organisms which lack either or both of asparaginyl-tRNA or glutaminyl-tRNA synthetases. The reaction takes place in the presence of glutamine and ATP through an activated phospho-Asp-tRNA(Asn) or phospho-Glu-tRNA(Gln). The chain is Aspartyl/glutamyl-tRNA(Asn/Gln) amidotransferase subunit C from Lactococcus lactis subsp. cremoris (strain MG1363).